The following is a 67-amino-acid chain: DNA-directed RNA polymerase subunit omega (67 aa).

It belongs to the RNA polymerase subunit omega family. In terms of assembly, the RNAP catalytic core consists of 2 alpha, 1 beta, 1 beta' and 1 omega subunit. When a sigma factor is associated with the core the holoenzyme is formed, which can initiate transcription.

The enzyme catalyses RNA(n) + a ribonucleoside 5'-triphosphate = RNA(n+1) + diphosphate. In terms of biological role, promotes RNA polymerase assembly. Latches the N- and C-terminal regions of the beta' subunit thereby facilitating its interaction with the beta and alpha subunits. In Listeria monocytogenes serotype 4b (strain F2365), this protein is DNA-directed RNA polymerase subunit omega.